A 216-amino-acid polypeptide reads, in one-letter code: Large ribosomal subunit protein uL24m (216 aa).

The transit peptide at 1-9 (MRLTLLLEM) directs the protein to the mitochondrion. Residues 56–89 (YFRGDTVEVLHGKDAGKQGKVTQVVRARNWVVVD) form the KOW domain.

It belongs to the universal ribosomal protein uL24 family. Component of the mitochondrial ribosome large subunit (39S) which comprises a 16S rRNA and about 50 distinct proteins. As to expression, ubiquitous. Expressed at greater levels in the kidney, adipose tissue, muscle and liver than the brain, heart, ovary and lung.

It is found in the mitochondrion. This is Large ribosomal subunit protein uL24m (mrpl24) from Xenopus laevis (African clawed frog).